Consider the following 39-residue polypeptide: Photosystem I reaction center subunit IX (39 aa).

The chain crosses the membrane as a helical span at residues 7–27 (FLTTAPVAFILFSSFVFALFI).

Belongs to the PsaJ family.

The protein resides in the cellular thylakoid membrane. May help in the organization of the PsaE and PsaF subunits. This chain is Photosystem I reaction center subunit IX, found in Synechococcus sp. (strain JA-2-3B'a(2-13)) (Cyanobacteria bacterium Yellowstone B-Prime).